A 127-amino-acid chain; its full sequence is Holo-[acyl-carrier-protein] synthase (127 aa).

Mg(2+)-binding residues include D9 and E58.

The protein belongs to the P-Pant transferase superfamily. AcpS family. It depends on Mg(2+) as a cofactor.

It is found in the cytoplasm. The catalysed reaction is apo-[ACP] + CoA = holo-[ACP] + adenosine 3',5'-bisphosphate + H(+). Its function is as follows. Transfers the 4'-phosphopantetheine moiety from coenzyme A to a Ser of acyl-carrier-protein. This is Holo-[acyl-carrier-protein] synthase from Shewanella sp. (strain ANA-3).